Here is a 1553-residue protein sequence, read N- to C-terminus: Sterol 3-beta-glucosyltransferase (1553 aa).

2 stretches are compositionally biased toward polar residues: residues 1–10 and 25–36; these read MASSQPTSSG and LNTETSSSQHRA. Disordered stretches follow at residues 1–106 and 189–270; these read MASS…NEED and PASA…GLAP. Over residues 90–100 the composition is skewed to basic and acidic residues; it reads LPDRLKDNGKE. The segment covering 211–222 has biased composition (low complexity); sequence LLQSVPSLSRLS. Residues 223 to 232 are compositionally biased toward basic residues; it reads SSHKSKKTKQ. 2 GRAM domains span residues 323–370 and 464–495; these read KKLK…HLPK and SLQRVIFRSHNDGDSVKISIPIRNILDIEEAQ. A PH domain is found at 374–470; that stretch reads EIAKSGYLSK…WVKSLQRVIF (97 aa). Disordered stretches follow at residues 542–569, 611–662, and 805–825; these read SPEDSGANDAPKGTGGDRAIGDNLGSPR, FSRR…FDDP, and GKKHYDHPAGRRTEREDVEDD. The segment covering 633 to 650 has biased composition (basic and acidic residues); that stretch reads LHGDGRRSFSKPRHEPHA. Positions 651-662 are enriched in polar residues; the sequence is STDSYAQSFDDP. Over residues 810-819 the composition is skewed to basic and acidic residues; the sequence is DHPAGRRTER. The GRAM 3 domain maps to 834–900; sequence ARFQAHFALP…KDIETVDKEK (67 aa). Residues S1020, R1021, D1023, A1328, H1330, H1343, S1346, G1347, T1348, D1367, and Q1368 each coordinate UDP-alpha-D-glucose. Disordered regions lie at residues 1446–1504 and 1527–1553; these read KHQS…GSMS and PALGSRVLSSPPTSPGAMRGAGGVKYV. Positions 1466 to 1488 are enriched in acidic residues; it reads PEDDQGQAAEEDDIDADDEEEES.

This sequence belongs to the glycosyltransferase 28 family.

The protein resides in the cytoplasm. The protein localises to the preautophagosomal structure membrane. It carries out the reaction a sterol + UDP-alpha-D-glucose = a sterol 3-beta-D-glucoside + UDP + H(+). The catalysed reaction is ergosterol + UDP-alpha-D-glucose = ergosteryl 3-beta-D-glucoside + UDP + H(+). Sterol glycosyltransferase responsible for the glycosylation of ergosterol to form ergosterol-glucoside. The chain is Sterol 3-beta-glucosyltransferase (apg-12) from Neurospora crassa (strain ATCC 24698 / 74-OR23-1A / CBS 708.71 / DSM 1257 / FGSC 987).